A 345-amino-acid polypeptide reads, in one-letter code: Biotin synthase (345 aa).

Residues 38–256 form the Radical SAM core domain; it reads RQVQVSTLLS…IAVARIMMPS (219 aa). C53, C57, and C60 together coordinate [4Fe-4S] cluster. C97, C128, C188, and R260 together coordinate [2Fe-2S] cluster.

This sequence belongs to the radical SAM superfamily. Biotin synthase family. As to quaternary structure, homodimer. The cofactor is [4Fe-4S] cluster. Requires [2Fe-2S] cluster as cofactor.

The enzyme catalyses (4R,5S)-dethiobiotin + (sulfur carrier)-SH + 2 reduced [2Fe-2S]-[ferredoxin] + 2 S-adenosyl-L-methionine = (sulfur carrier)-H + biotin + 2 5'-deoxyadenosine + 2 L-methionine + 2 oxidized [2Fe-2S]-[ferredoxin]. Its pathway is cofactor biosynthesis; biotin biosynthesis; biotin from 7,8-diaminononanoate: step 2/2. Its function is as follows. Catalyzes the conversion of dethiobiotin (DTB) to biotin by the insertion of a sulfur atom into dethiobiotin via a radical-based mechanism. The sequence is that of Biotin synthase from Yersinia pestis bv. Antiqua (strain Antiqua).